Reading from the N-terminus, the 307-residue chain is UDP-3-O-acyl-N-acetylglucosamine deacetylase (307 aa).

Zn(2+) is bound by residues His78, His241, and Asp245. His268 functions as the Proton donor in the catalytic mechanism.

This sequence belongs to the LpxC family. It depends on Zn(2+) as a cofactor.

It carries out the reaction a UDP-3-O-[(3R)-3-hydroxyacyl]-N-acetyl-alpha-D-glucosamine + H2O = a UDP-3-O-[(3R)-3-hydroxyacyl]-alpha-D-glucosamine + acetate. It functions in the pathway glycolipid biosynthesis; lipid IV(A) biosynthesis; lipid IV(A) from (3R)-3-hydroxytetradecanoyl-[acyl-carrier-protein] and UDP-N-acetyl-alpha-D-glucosamine: step 2/6. Catalyzes the hydrolysis of UDP-3-O-myristoyl-N-acetylglucosamine to form UDP-3-O-myristoylglucosamine and acetate, the committed step in lipid A biosynthesis. The protein is UDP-3-O-acyl-N-acetylglucosamine deacetylase of Bordetella bronchiseptica (strain ATCC BAA-588 / NCTC 13252 / RB50) (Alcaligenes bronchisepticus).